The chain runs to 479 residues: Protein TRIGALACTOSYLDIACYLGLYCEROL 4, chloroplastic (479 aa).

Positions 288-310 (VFLSSPHVAVSGIIGSVMTAAFG) form a transmembrane segment.

As to quaternary structure, homodimer. Forms dimeric beta-barrel. Interacts with TGD5.

The protein resides in the plastid. The protein localises to the chloroplast outer membrane. Its subcellular location is the endoplasmic reticulum. Involved in lipid transfer from the endoplasmic reticulum (ER) to plastids. Specifically binds phosphatidic acid (PtdOH). The chain is Protein TRIGALACTOSYLDIACYLGLYCEROL 4, chloroplastic from Arabidopsis thaliana (Mouse-ear cress).